The chain runs to 449 residues: Phosphoglucosamine mutase (449 aa).

Ser101 serves as the catalytic Phosphoserine intermediate. Residues Ser101, Asp241, Asp243, and Asp245 each contribute to the Mg(2+) site. Ser101 carries the post-translational modification Phosphoserine.

The protein belongs to the phosphohexose mutase family. Requires Mg(2+) as cofactor. In terms of processing, activated by phosphorylation.

It catalyses the reaction alpha-D-glucosamine 1-phosphate = D-glucosamine 6-phosphate. Functionally, catalyzes the conversion of glucosamine-6-phosphate to glucosamine-1-phosphate. This chain is Phosphoglucosamine mutase, found in Ruminiclostridium cellulolyticum (strain ATCC 35319 / DSM 5812 / JCM 6584 / H10) (Clostridium cellulolyticum).